Here is a 173-residue protein sequence, read N- to C-terminus: Shikimate kinase (173 aa).

14-19 (GAGKST) contributes to the ATP binding site. Residue S18 coordinates Mg(2+). Substrate is bound by residues D36, R60, and G82. R120 is an ATP binding site. Substrate is bound at residue R140. Position 157 (Q157) interacts with ATP.

This sequence belongs to the shikimate kinase family. As to quaternary structure, monomer. Mg(2+) is required as a cofactor.

The protein localises to the cytoplasm. The enzyme catalyses shikimate + ATP = 3-phosphoshikimate + ADP + H(+). It participates in metabolic intermediate biosynthesis; chorismate biosynthesis; chorismate from D-erythrose 4-phosphate and phosphoenolpyruvate: step 5/7. Catalyzes the specific phosphorylation of the 3-hydroxyl group of shikimic acid using ATP as a cosubstrate. This is Shikimate kinase from Buchnera aphidicola subsp. Acyrthosiphon pisum (strain APS) (Acyrthosiphon pisum symbiotic bacterium).